The chain runs to 334 residues: MANIIPKIAIIGEGVIGCTSALQISKAIPNAKITVLHDKPFKKSCSAGPAGLFRIDYEENTEYGRASFAWFSHLYRTTKGSETGVKLVSGHIQSDNLESLKQQQRAYGDIVYNFRFLDDRERLDIFPEPSKHCIHYTAYASEGNKYVPYLKNLLLEQKIEFKQQEVTSLDAVADAGYDVIVNCAGLYGGKLAGDDDTCYPIRGVILEVDAPWHKHFNYRDFTTFTIPKEHSVVVGSTKQDNRWDLEITDEDRNDILKRYIALHPGMREPKIIKEWSALRPGRKHVRIEAQKRTSVGNSKDYMVVHHYGHGSNGFTLGWGTAIEATKLVKTALGL.

5 residues coordinate FAD: Asp38, Lys39, Ser46, Gly310, and Thr315.

The protein belongs to the DAMOX/DASOX family. FAD serves as cofactor. In terms of tissue distribution, expressed in the intestinal cells, pharyngeal muscles, and body wall muscles in adult hermaphrodites.

The protein localises to the cytoplasm. It catalyses the reaction D-aspartate + O2 + H2O = oxaloacetate + H2O2 + NH4(+). The catalysed reaction is D-glutamate + O2 + H2O = H2O2 + 2-oxoglutarate + NH4(+). Its activity is regulated as follows. Inhibited by thiolactomycin. Its function is as follows. Selectively catalyzes the oxidative deamination of acidic amino acids. May play a role in the egg-laying events and early development of the worm, in addition to quality control of the germ cells. This chain is D-aspartate oxidase 2 (ddo-2), found in Caenorhabditis elegans.